Here is a 90-residue protein sequence, read N- to C-terminus: Carboxysome shell vertex protein CsoS4A (90 aa).

A BMV domain is found at 1 to 78 (MKIYKVDKTL…SDLTIVGIID (78 aa)).

Belongs to the CcmL/EutN family. CsoS4 subfamily. In terms of assembly, homopentamer.

The protein localises to the carboxysome. Probably forms vertices in the carboxysome, a polyhedral inclusion where RuBisCO (ribulose bisphosphate carboxylase, cbbL-cbbS) is sequestered. Has been modeled to induce curvature upon insertion into an otherwise flat hexagonal layer of major carboxysome subunits. The polypeptide is Carboxysome shell vertex protein CsoS4A (Hydrogenovibrio crunogenus (strain DSM 25203 / XCL-2) (Thiomicrospira crunogena)).